Here is a 118-residue protein sequence, read N- to C-terminus: uncharacterized protein (118 aa).

This is an uncharacterized protein from Invertebrate iridescent virus 6 (IIV-6).